We begin with the raw amino-acid sequence, 191 residues long: RNA polymerase sigma factor CnrH (191 aa).

The short motif at 49-62 is the Polymerase core binding element; it reads DVVQDTFVAAWHAL. Residues 156 to 175 constitute a DNA-binding region (H-T-H motif); the sequence is QPEAAAVLGLSVKAVEGRIG.

Belongs to the sigma-70 factor family. ECF subfamily.

Sigma factors are initiation factors that promote the attachment of RNA polymerase to specific initiation sites and are then released. This sigma factor regulates the genes for a membrane-located efflux system that confers resistance to nickel and cobalt. Functionally, cnrH alone is able to activate CNR expression, while both CnrY and CrnX are needed for nickel induction of cnrH. Binds DNA in an RNA polymerase-dependent fashion. CnrH may be controlled by a CnrYX transmembrane anti-sigma factor complex which binds CnrH in the absence of Ni(2+). If Ni(2+) appears in the periplasm, it may be bound by CnrR (CnrX); the signal then would be transmitted by CnrY into the cytoplasm and CnrH would be released. The sequence is that of RNA polymerase sigma factor CnrH (cnrH) from Cupriavidus metallidurans (strain ATCC 43123 / DSM 2839 / NBRC 102507 / CH34) (Ralstonia metallidurans).